A 505-amino-acid chain; its full sequence is Putative thymidine phosphorylase (505 aa).

It belongs to the thymidine/pyrimidine-nucleoside phosphorylase family. Type 2 subfamily.

The catalysed reaction is thymidine + phosphate = 2-deoxy-alpha-D-ribose 1-phosphate + thymine. This chain is Putative thymidine phosphorylase, found in Tolumonas auensis (strain DSM 9187 / NBRC 110442 / TA 4).